An 896-amino-acid chain; its full sequence is Echinoderm microtubule-associated protein-like 3 (896 aa).

Met1 is subject to N-acetylmethionine. Residues 16-43 (LQSLSQRLRVQEQEMELVKAALAEALRL) adopt a coiled-coil conformation. The interval 50 to 209 (PSSLQGSGTP…GGPGSRRSNY (160 aa)) is disordered. A compositionally biased stretch (polar residues) spans 77–88 (TPSLVSRGTQTE). The span at 134-145 (PGPPGILRPLQP) shows a compositional bias: pro residues. A compositionally biased stretch (low complexity) spans 154-163 (RNSSSSSSPS). The segment covering 174 to 189 (AISSANLLVRSGSTES) has biased composition (polar residues). Phosphoserine is present on residues Ser176, Ser198, and Ser204. WD repeat units lie at residues 234 to 286 (RSLE…LYRP), 295 to 344 (GGGQ…IWDS), 350 to 392 (LQEI…VWDC), 398 to 434 (LAEIKSTNDSVLAVGFNPRDSSCIVTSGKSHVHFWNW), 448 to 487 (RKQGVFGKYKKPKFIPCFVFLPDGDILTGDSEGNILTWGR), 504 to 543 (YGIVAQAHAHEGSIFALCLRRDGTVLSGGGRDRRLVQWGP), 549 to 584 (QEAEIPEHFGAVRAIAEGLGSELLVGTTKNALLRGD), 589 to 626 (FSPVIQGHTDELWGLCTHPSQNRFLTCGHDRQLCLWDG), 629 to 667 (HALAWSIDLKETGLCADFHPSGAVVAVGLNTGRWLVLDT), 674 to 709 (SDVIDGNEQLSVVRYSPDGLYLAIGSHDNVIYIYSV), 716 to 755 (SSRFGRCMGHSSFITHLDWSKDGNFIMSNSGDYEILYWDV), 765 to 823 (RYES…LFQY), and 830 to 869 (APSRMYGGHGSHVTSVRFTHDDSHLVSLGGKDASIFQWRV). Positions 876–896 (GPAPATPSRTPSLSPASSLDV) are disordered. Low complexity predominate over residues 877-896 (PAPATPSRTPSLSPASSLDV). At Thr881 the chain carries Phosphothreonine; by CDK1. Ser883 carries the post-translational modification Phosphoserine.

The protein belongs to the WD repeat EMAP family. Homotrimer; self-association is mediated by the N-terminal coiled coil. Interacts with EML2 but not with EML1. Interacts (phosphorylated at Thr-881) with TUBG1, HAUS1, HAUS2, HAUS3, HAUS4, HAUS5, HAUS6, HAUS7 and HAUS8. In terms of processing, phosphorylation at Thr-881 during mitosis is required for interaction with TUBG1, HAUS1, HAUS2, HAUS3, HAUS4, HAUS5, HAUS6, HAUS7 and HAUS8 and their recruitment to spindle microtubules.

The protein localises to the cytoplasm. It is found in the cytoskeleton. The protein resides in the nucleus. It localises to the midbody. Its subcellular location is the spindle. Its function is as follows. Regulates mitotic spindle assembly, microtubule (MT)-kinetochore attachment and chromosome separation via recruitment of HAUS augmin-like complex and TUBG1 to the existing MTs and promoting MT-based MT nucleation. Required for proper alignnment of chromosomes during metaphase. The chain is Echinoderm microtubule-associated protein-like 3 (EML3) from Homo sapiens (Human).